A 300-amino-acid chain; its full sequence is MSAHIIDGKAAAARVLQQVRHDVNILKAEGIEPALAVILVGNDAASEVYVRNKILRAGEAGIRSLEHRLPADSSQARLLALIAELNADNTVNGILLQLPLPAHIDENRVLQAIDPDKDVDGFHSENVGGLSQGRNVLTPCTPSGCLHLLEETCGDLSGKHAVVIGRSNIVGKPMAALLLQAHCSVTVVHSRSTDARALCQLADIVVAAVGRPRLIDASWLKRGAVVIDVGINRIEDHGRSRLVGDVDFASATEVASAITPVPGGVGPMTIAFLMKNTVTAARQQAHAQRSQPEAVCLSTY.

NADP(+) contacts are provided by residues 165–167 (GRS), Ser-190, and Ile-231.

The protein belongs to the tetrahydrofolate dehydrogenase/cyclohydrolase family. In terms of assembly, homodimer.

The catalysed reaction is (6R)-5,10-methylene-5,6,7,8-tetrahydrofolate + NADP(+) = (6R)-5,10-methenyltetrahydrofolate + NADPH. It catalyses the reaction (6R)-5,10-methenyltetrahydrofolate + H2O = (6R)-10-formyltetrahydrofolate + H(+). The protein operates within one-carbon metabolism; tetrahydrofolate interconversion. Functionally, catalyzes the oxidation of 5,10-methylenetetrahydrofolate to 5,10-methenyltetrahydrofolate and then the hydrolysis of 5,10-methenyltetrahydrofolate to 10-formyltetrahydrofolate. The polypeptide is Bifunctional protein FolD 2 (Pseudomonas syringae pv. syringae (strain B728a)).